The chain runs to 488 residues: uncharacterized protein (488 aa).

Belongs to the protein kinase superfamily. ADCK protein kinase family.

This is an uncharacterized protein from Mycobacterium tuberculosis (strain CDC 1551 / Oshkosh).